The sequence spans 482 residues: Membrane-bound lytic murein transglycosylase F (482 aa).

Residues Met-1–Ala-18 form the signal peptide. The non-LT domain stretch occupies residues Ile-19–Ile-267. The LT domain stretch occupies residues Ser-268–Asp-482. Glu-312 is a catalytic residue. The span at Glu-457 to Ala-470 shows a compositional bias: polar residues. Positions Glu-457–Asp-482 are disordered. The segment covering Asn-473–Asp-482 has biased composition (basic and acidic residues).

It in the N-terminal section; belongs to the bacterial solute-binding protein 3 family. The protein in the C-terminal section; belongs to the transglycosylase Slt family.

The protein localises to the cell outer membrane. It catalyses the reaction Exolytic cleavage of the (1-&gt;4)-beta-glycosidic linkage between N-acetylmuramic acid (MurNAc) and N-acetylglucosamine (GlcNAc) residues in peptidoglycan, from either the reducing or the non-reducing ends of the peptidoglycan chains, with concomitant formation of a 1,6-anhydrobond in the MurNAc residue.. Functionally, murein-degrading enzyme that degrades murein glycan strands and insoluble, high-molecular weight murein sacculi, with the concomitant formation of a 1,6-anhydromuramoyl product. Lytic transglycosylases (LTs) play an integral role in the metabolism of the peptidoglycan (PG) sacculus. Their lytic action creates space within the PG sacculus to allow for its expansion as well as for the insertion of various structures such as secretion systems and flagella. This chain is Membrane-bound lytic murein transglycosylase F, found in Haemophilus influenzae (strain PittGG).